A 199-amino-acid polypeptide reads, in one-letter code: uncharacterized protein (199 aa).

This is an uncharacterized protein from Methanocaldococcus jannaschii (strain ATCC 43067 / DSM 2661 / JAL-1 / JCM 10045 / NBRC 100440) (Methanococcus jannaschii).